Reading from the N-terminus, the 438-residue chain is Enolase (438 aa).

Q164 lines the (2R)-2-phosphoglycerate pocket. Residue E206 is the Proton donor of the active site. D243, E289, and D316 together coordinate Mg(2+). Residues K341, R370, S371, and K392 each contribute to the (2R)-2-phosphoglycerate site. The Proton acceptor role is filled by K341.

It belongs to the enolase family. Requires Mg(2+) as cofactor.

The protein localises to the cytoplasm. It is found in the secreted. Its subcellular location is the cell surface. The catalysed reaction is (2R)-2-phosphoglycerate = phosphoenolpyruvate + H2O. The protein operates within carbohydrate degradation; glycolysis; pyruvate from D-glyceraldehyde 3-phosphate: step 4/5. Catalyzes the reversible conversion of 2-phosphoglycerate (2-PG) into phosphoenolpyruvate (PEP). It is essential for the degradation of carbohydrates via glycolysis. The sequence is that of Enolase from Borrelia garinii subsp. bavariensis (strain ATCC BAA-2496 / DSM 23469 / PBi) (Borreliella bavariensis).